Consider the following 269-residue polypeptide: Polyamine aminopropyltransferase (269 aa).

Residues 1-226 (MVWFFEYYDG…ALWSFIIGGE (226 aa)) form the PABS domain. Residue Gln-28 participates in S-methyl-5'-thioadenosine binding. Residues His-59 and Asp-83 each contribute to the spermidine site. S-methyl-5'-thioadenosine-binding positions include Asp-102 and 133–134 (DG). Residue Asp-150 is the Proton acceptor of the active site. 150–153 (DSTD) is a binding site for spermidine.

This sequence belongs to the spermidine/spermine synthase family. Homodimer or homotetramer.

It is found in the cytoplasm. It carries out the reaction S-adenosyl 3-(methylsulfanyl)propylamine + putrescine = S-methyl-5'-thioadenosine + spermidine + H(+). It functions in the pathway amine and polyamine biosynthesis; spermidine biosynthesis; spermidine from putrescine: step 1/1. In terms of biological role, catalyzes the irreversible transfer of a propylamine group from the amino donor S-adenosylmethioninamine (decarboxy-AdoMet) to putrescine (1,4-diaminobutane) to yield spermidine. This is Polyamine aminopropyltransferase from Archaeoglobus fulgidus (strain ATCC 49558 / DSM 4304 / JCM 9628 / NBRC 100126 / VC-16).